The following is an 89-amino-acid chain: Cornifin (89 aa).

The disordered stretch occupies residues 1–29; that stretch reads MSSQQQKQPCTPPPQLQQQQVKQPCQPPP. N-acetylserine is present on S2. 8 repeat units span residues 3 to 14, 18 to 29, 31 to 38, 39 to 46, 47 to 54, 55 to 62, 63 to 70, and 71 to 78. The interval 3–29 is 2 X 12 AA approximate repeats; the sequence is SQQQKQPCTPPPQLQQQQVKQPCQPPP. The 6 X 8 AA approximate tandem repeats stretch occupies residues 31–78; sequence EPCIPKTKEPCLPKVPEPCHPKVPEPCQPKVPEPCHPKVPEPCPSTVT. The disordered stretch occupies residues 68–89; it reads KVPEPCPSTVTPAPAQQKTKQK. A compositionally biased stretch (polar residues) spans 75–89; sequence STVTPAPAQQKTKQK.

This sequence belongs to the cornifin (SPRR) family.

The protein localises to the cytoplasm. Cross-linked envelope protein of keratinocytes. It is a keratinocyte protein that first appears in the cell cytosol, but ultimately becomes cross-linked to membrane proteins by transglutaminase. All that results in the formation of an insoluble envelope beneath the plasma membrane. In Macaca mulatta (Rhesus macaque), this protein is Cornifin (SPRR1).